Here is a 395-residue protein sequence, read N- to C-terminus: Elongation factor Tu (395 aa).

One can recognise a tr-type G domain in the interval 10–205 (KVHMNVGTIG…TMDEYFKDPV (196 aa)). Positions 19-26 (GHVDHGKT) are G1. 19 to 26 (GHVDHGKT) provides a ligand contact to GTP. Threonine 26 contributes to the Mg(2+) binding site. The interval 60–64 (GITIN) is G2. The tract at residues 81 to 84 (DCPG) is G3. GTP-binding positions include 81-85 (DCPGH) and 136-139 (NKVD). The interval 136 to 139 (NKVD) is G4. Positions 173–175 (SAF) are G5.

The protein belongs to the TRAFAC class translation factor GTPase superfamily. Classic translation factor GTPase family. EF-Tu/EF-1A subfamily. Monomer.

The protein resides in the cytoplasm. The enzyme catalyses GTP + H2O = GDP + phosphate + H(+). Its function is as follows. GTP hydrolase that promotes the GTP-dependent binding of aminoacyl-tRNA to the A-site of ribosomes during protein biosynthesis. The sequence is that of Elongation factor Tu from Treponema denticola (strain ATCC 35405 / DSM 14222 / CIP 103919 / JCM 8153 / KCTC 15104).